The sequence spans 701 residues: DNA ligase (701 aa).

Residues 58 to 62 (DYEYD), 107 to 108 (SL), and Glu-138 each bind NAD(+). Lys-140 functions as the N6-AMP-lysine intermediate in the catalytic mechanism. NAD(+) is bound by residues Arg-161, Glu-199, Lys-323, and Lys-347. Residues Cys-441, Cys-444, Cys-459, and Cys-464 each coordinate Zn(2+). In terms of domain architecture, BRCT spans 621–701 (EKRGKLAGLN…EEFLKMIGQQ (81 aa)).

Belongs to the NAD-dependent DNA ligase family. LigA subfamily. Mg(2+) is required as a cofactor. Requires Mn(2+) as cofactor.

It catalyses the reaction NAD(+) + (deoxyribonucleotide)n-3'-hydroxyl + 5'-phospho-(deoxyribonucleotide)m = (deoxyribonucleotide)n+m + AMP + beta-nicotinamide D-nucleotide.. DNA ligase that catalyzes the formation of phosphodiester linkages between 5'-phosphoryl and 3'-hydroxyl groups in double-stranded DNA using NAD as a coenzyme and as the energy source for the reaction. It is essential for DNA replication and repair of damaged DNA. The polypeptide is DNA ligase (Sulfurihydrogenibium azorense (strain DSM 15241 / OCM 825 / Az-Fu1)).